Here is a 385-residue protein sequence, read N- to C-terminus: MNDLRSYDLYTSLVSHSDSITSASNTLTEGTAIALSTALLHPLDSILTRLQVRYASQHHNKKKDNRTRTRKPLDVLGDIVDLAAENVKDAEGRAVLYAGLREAICKQTAENMLVPAVYAALHARRLNLGRTAGNELLLSLVSMAFVKLFTEPLGTIMVRRQVTGSGTRCVVDDILRQKGVGGLWSAYGATLVLCVRSCVLPVVYLALRRRLGMKRGGLLGMLVLRAIAESVVYRLAVMQVCARAGVKAVGNGSKLGSTYTNDYTICVLMVCLGLLLEVIRTLSSQGVTTVTSDVVTVAMMRLSAVMLYMLEPFLLSEQAITDSVRENVDAGASQPLLDDAKYMNNAVKRAISIVNRGIGLASHGRDDVAVAELVGDYVEDGPEDG.

Solcar repeat units follow at residues 24 to 124 (SNTL…LHAR) and 130 to 210 (RTAG…LRRR). Transmembrane regions (helical) follow at residues 30-47 (GTAI…DSIL), 132-150 (AGNE…KLFT), 184-207 (WSAY…YLAL), 263-279 (YTIC…LEVI), and 294-310 (VVTV…LYML).

This sequence belongs to the mitochondrial carrier (TC 2.A.29) family.

Its subcellular location is the mitochondrion inner membrane. May function as a mitochondrial transporter. This is Putative mitochondrial carrier protein TRV_02148.2 from Trichophyton verrucosum (strain HKI 0517).